Here is a 602-residue protein sequence, read N- to C-terminus: ATP-dependent zinc metalloprotease FtsH 3 (602 aa).

Over 1 to 18 the chain is Cytoplasmic; sequence MNSWFLQVSKRLGPAGRR. A helical transmembrane segment spans residues 19 to 39; that stretch reads LWLLGFMGVVLAVTLGLALRA. Over 40–117 the chain is Periplasmic; sequence ARESATQRTA…DFASREDPSR (78 aa). The helical transmembrane segment at 118-138 threads the bilayer; it reads AASAVLPVVVLAAVGFALFTV. Residues 139 to 602 lie on the Cytoplasmic side of the membrane; the sequence is SRRRSPKVFS…RRPRPEDQAA (464 aa). Residue 202–209 participates in ATP binding; the sequence is GEPGTGKT. His425 is a Zn(2+) binding site. The active site involves Glu426. Residues His429 and Asp501 each coordinate Zn(2+).

This sequence in the central section; belongs to the AAA ATPase family. The protein in the C-terminal section; belongs to the peptidase M41 family. Homohexamer. Zn(2+) serves as cofactor.

It is found in the cell inner membrane. In terms of biological role, acts as a processive, ATP-dependent zinc metallopeptidase for both cytoplasmic and membrane proteins. Plays a role in the quality control of integral membrane proteins. The polypeptide is ATP-dependent zinc metalloprotease FtsH 3 (Sorangium cellulosum (strain So ce56) (Polyangium cellulosum (strain So ce56))).